The primary structure comprises 332 residues: tRNA-dihydrouridine(20/20a) synthase (332 aa).

Residues 20-22 (PMM) and glutamine 73 contribute to the FMN site. Cysteine 103 functions as the Proton donor in the catalytic mechanism. Residues lysine 142, histidine 174, 214-216 (NGG), and 236-237 (GR) each bind FMN.

This sequence belongs to the Dus family. DusA subfamily. The cofactor is FMN.

The catalysed reaction is 5,6-dihydrouridine(20) in tRNA + NADP(+) = uridine(20) in tRNA + NADPH + H(+). The enzyme catalyses 5,6-dihydrouridine(20) in tRNA + NAD(+) = uridine(20) in tRNA + NADH + H(+). It carries out the reaction 5,6-dihydrouridine(20a) in tRNA + NADP(+) = uridine(20a) in tRNA + NADPH + H(+). It catalyses the reaction 5,6-dihydrouridine(20a) in tRNA + NAD(+) = uridine(20a) in tRNA + NADH + H(+). In terms of biological role, catalyzes the synthesis of 5,6-dihydrouridine (D), a modified base found in the D-loop of most tRNAs, via the reduction of the C5-C6 double bond in target uridines. Specifically modifies U20 and U20a in tRNAs. This is tRNA-dihydrouridine(20/20a) synthase from Pseudomonas aeruginosa (strain ATCC 15692 / DSM 22644 / CIP 104116 / JCM 14847 / LMG 12228 / 1C / PRS 101 / PAO1).